Reading from the N-terminus, the 146-residue chain is Hemoglobin subunit beta (146 aa).

Residues 2–146 (PFSAHEEKLI…VAAALSAEYH (145 aa)) enclose the Globin domain. Residues His63 and His92 each contribute to the heme b site.

It belongs to the globin family. In terms of assembly, heterotetramer of two alpha chains and two beta chains. In terms of tissue distribution, red blood cells.

In terms of biological role, involved in oxygen transport from the lung to the various peripheral tissues. In Caiman crocodilus (Spectacled caiman), this protein is Hemoglobin subunit beta (HBB).